The primary structure comprises 284 residues: Asialoglycoprotein receptor 1 (284 aa).

Residues 1–39 (MTKDYQDFQHLDNENDHHQLQRGPPPAPRLLQRLCSGFR) lie on the Cytoplasmic side of the membrane. The short motif at 5-8 (YQDF) is the Endocytosis signal element. Cys-35 is lipidated: S-palmitoyl cysteine. A helical; Signal-anchor for type II membrane protein membrane pass occupies residues 40–60 (LFLLSLGLSILLLVVVCVITS). Residues 58-122 (ITSQNSQLRE…EDLREDHSRL (65 aa)) are a coiled coil. At 61-284 (QNSQLREDLR…VCETELGKAN (224 aa)) the chain is on the extracellular side. 3 N-linked (GlcNAc...) asparagine glycosylation sites follow: Asn-75, Asn-78, and Asn-146. Cystine bridges form between Cys-153/Cys-164, Cys-181/Cys-276, and Cys-254/Cys-268. The C-type lectin domain maps to 160–277 (YEGSCYWFSS…CRRPYRWVCE (118 aa)). Ca(2+) contacts are provided by Val-190, Glu-196, Asp-215, Gln-239, Asp-241, Asp-242, Glu-252, Asp-253, Asn-264, Asp-265, and Glu-277.

Interacts with LASS2. In terms of processing, phosphorylated on a cytoplasmic Ser residue. As to expression, expressed exclusively in hepatic parenchymal cells.

It is found in the membrane. Functionally, mediates the endocytosis of plasma glycoproteins to which the terminal sialic acid residue on their complex carbohydrate moieties has been removed. The receptor recognizes terminal galactose and N-acetylgalactosamine units. After ligand binding to the receptor, the resulting complex is internalized and transported to a sorting organelle, where receptor and ligand are disassociated. The receptor then returns to the cell membrane surface. This is Asialoglycoprotein receptor 1 (Asgr1) from Rattus norvegicus (Rat).